The following is a 186-amino-acid chain: Elongation factor P (186 aa).

This sequence belongs to the elongation factor P family.

Its subcellular location is the cytoplasm. The protein operates within protein biosynthesis; polypeptide chain elongation. Involved in peptide bond synthesis. Stimulates efficient translation and peptide-bond synthesis on native or reconstituted 70S ribosomes in vitro. Probably functions indirectly by altering the affinity of the ribosome for aminoacyl-tRNA, thus increasing their reactivity as acceptors for peptidyl transferase. This Coprothermobacter proteolyticus (strain ATCC 35245 / DSM 5265 / OCM 4 / BT) protein is Elongation factor P.